A 186-amino-acid polypeptide reads, in one-letter code: Ribosome-recycling factor (186 aa).

The protein belongs to the RRF family.

Its subcellular location is the cytoplasm. Its function is as follows. Responsible for the release of ribosomes from messenger RNA at the termination of protein biosynthesis. May increase the efficiency of translation by recycling ribosomes from one round of translation to another. This is Ribosome-recycling factor from Beijerinckia indica subsp. indica (strain ATCC 9039 / DSM 1715 / NCIMB 8712).